Consider the following 421-residue polypeptide: D-amino acid dehydrogenase (421 aa).

3–17 (VLVLGGGVVGVASAY) is an FAD binding site.

This sequence belongs to the DadA oxidoreductase family. FAD is required as a cofactor.

The enzyme catalyses a D-alpha-amino acid + A + H2O = a 2-oxocarboxylate + AH2 + NH4(+). It participates in amino-acid degradation; D-alanine degradation; NH(3) and pyruvate from D-alanine: step 1/1. Functionally, oxidative deamination of D-amino acids. In Methylobacterium nodulans (strain LMG 21967 / CNCM I-2342 / ORS 2060), this protein is D-amino acid dehydrogenase.